The chain runs to 321 residues: Glucokinase (321 aa).

Position 8–13 (8–13) interacts with ATP; it reads ADIGGT.

The protein belongs to the bacterial glucokinase family.

The protein localises to the cytoplasm. The catalysed reaction is D-glucose + ATP = D-glucose 6-phosphate + ADP + H(+). This Paramagnetospirillum magneticum (strain ATCC 700264 / AMB-1) (Magnetospirillum magneticum) protein is Glucokinase.